We begin with the raw amino-acid sequence, 396 residues long: Tryptophan synthase beta chain (396 aa).

The residue at position 86 (Lys-86) is an N6-(pyridoxal phosphate)lysine.

It belongs to the TrpB family. In terms of assembly, tetramer of two alpha and two beta chains. Requires pyridoxal 5'-phosphate as cofactor.

The catalysed reaction is (1S,2R)-1-C-(indol-3-yl)glycerol 3-phosphate + L-serine = D-glyceraldehyde 3-phosphate + L-tryptophan + H2O. It functions in the pathway amino-acid biosynthesis; L-tryptophan biosynthesis; L-tryptophan from chorismate: step 5/5. In terms of biological role, the beta subunit is responsible for the synthesis of L-tryptophan from indole and L-serine. This is Tryptophan synthase beta chain from Vibrio vulnificus (strain CMCP6).